We begin with the raw amino-acid sequence, 310 residues long: N-acetyl-gamma-glutamyl-phosphate reductase (310 aa).

Residue C117 is part of the active site.

Belongs to the NAGSA dehydrogenase family. Type 2 subfamily.

The protein localises to the cytoplasm. It carries out the reaction N-acetyl-L-glutamate 5-semialdehyde + phosphate + NADP(+) = N-acetyl-L-glutamyl 5-phosphate + NADPH + H(+). It participates in amino-acid biosynthesis; L-arginine biosynthesis; N(2)-acetyl-L-ornithine from L-glutamate: step 3/4. Catalyzes the NADPH-dependent reduction of N-acetyl-5-glutamyl phosphate to yield N-acetyl-L-glutamate 5-semialdehyde. This Brucella abortus (strain S19) protein is N-acetyl-gamma-glutamyl-phosphate reductase.